The following is an 82-amino-acid chain: Small ribosomal subunit protein bS16 (82 aa).

The protein belongs to the bacterial ribosomal protein bS16 family.

The sequence is that of Small ribosomal subunit protein bS16 from Elusimicrobium minutum (strain Pei191).